The sequence spans 267 residues: Cell division protein FtsQ (267 aa).

Residues 1–32 (MRQKTISNKNKQTKNTNNISLRRKLGLMYKKA) lie on the Cytoplasmic side of the membrane. Residues 33–53 (ILVLKIVLMIFVCLFVFTKYF) traverse the membrane as a helical segment. Residues 54 to 267 (TSIKTYLITN…DRNKYYIQKY (214 aa)) lie on the Periplasmic side of the membrane. Positions 73–141 (FRLENVIIEG…NTVYIKLFER (69 aa)) constitute a POTRA domain.

It belongs to the FtsQ/DivIB family. FtsQ subfamily.

It localises to the cell inner membrane. Essential cell division protein. This Rickettsia prowazekii (strain Madrid E) protein is Cell division protein FtsQ.